The following is a 334-amino-acid chain: Dolichyl-phosphate beta-glucosyltransferase (334 aa).

At 1-12 (MRALRFLIENRN) the chain is on the lumenal side. The chain crosses the membrane as a helical span at residues 13 to 33 (TVFFTLLVALVLSLYLLVYLF). At 34 to 334 (SHTPRPPYPE…LGIYRDNKKC (301 aa)) the chain is on the cytoplasmic side.

Belongs to the glycosyltransferase 2 family.

The protein resides in the endoplasmic reticulum membrane. It carries out the reaction a di-trans,poly-cis-dolichyl phosphate + UDP-alpha-D-glucose = a di-trans,poly-cis-dolichyl beta-D-glucosyl phosphate + UDP. It participates in protein modification; protein glycosylation. Its function is as follows. Endoplasmic reticulum membrane-bound UDP-glucose:dolichyl-phosphate glucosyltransferase involved in protein N-linked glycosylation. The chain is Dolichyl-phosphate beta-glucosyltransferase from Saccharomyces cerevisiae (strain ATCC 204508 / S288c) (Baker's yeast).